Here is a 34-residue protein sequence, read N- to C-terminus: Cytochrome c oxidase subunit 6B (34 aa).

This sequence belongs to the cytochrome c oxidase subunit 6B family. In terms of assembly, component of the cytochrome c oxidase (complex IV, CIV), a multisubunit enzyme composed of 14 subunits. The complex is composed of a catalytic core of 3 subunits MT-CO1, MT-CO2 and MT-CO3, encoded in the mitochondrial DNA, and 11 supernumerary subunits COX4I, COX5A, COX5B, COX6A, COX6B, COX6C, COX7A, COX7B, COX7C, COX8 and NDUFA4, which are encoded in the nuclear genome. The complex exists as a monomer or a dimer and forms supercomplexes (SCs) in the inner mitochondrial membrane with NADH-ubiquinone oxidoreductase (complex I, CI) and ubiquinol-cytochrome c oxidoreductase (cytochrome b-c1 complex, complex III, CIII), resulting in different assemblies (supercomplex SCI(1)III(2)IV(1) and megacomplex MCI(2)III(2)IV(2)). The N-terminus is blocked.

It localises to the mitochondrion inner membrane. It functions in the pathway energy metabolism; oxidative phosphorylation. Its function is as follows. Component of the cytochrome c oxidase, the last enzyme in the mitochondrial electron transport chain which drives oxidative phosphorylation. The respiratory chain contains 3 multisubunit complexes succinate dehydrogenase (complex II, CII), ubiquinol-cytochrome c oxidoreductase (cytochrome b-c1 complex, complex III, CIII) and cytochrome c oxidase (complex IV, CIV), that cooperate to transfer electrons derived from NADH and succinate to molecular oxygen, creating an electrochemical gradient over the inner membrane that drives transmembrane transport and the ATP synthase. Cytochrome c oxidase is the component of the respiratory chain that catalyzes the reduction of oxygen to water. Electrons originating from reduced cytochrome c in the intermembrane space (IMS) are transferred via the dinuclear copper A center (CU(A)) of subunit 2 and heme A of subunit 1 to the active site in subunit 1, a binuclear center (BNC) formed by heme A3 and copper B (CU(B)). The BNC reduces molecular oxygen to 2 water molecules using 4 electrons from cytochrome c in the IMS and 4 protons from the mitochondrial matrix. This Thunnus obesus (Bigeye tuna) protein is Cytochrome c oxidase subunit 6B.